Consider the following 262-residue polypeptide: 3-deoxy-manno-octulosonate cytidylyltransferase (262 aa).

This sequence belongs to the KdsB family.

The protein resides in the cytoplasm. It catalyses the reaction 3-deoxy-alpha-D-manno-oct-2-ulosonate + CTP = CMP-3-deoxy-beta-D-manno-octulosonate + diphosphate. Its pathway is nucleotide-sugar biosynthesis; CMP-3-deoxy-D-manno-octulosonate biosynthesis; CMP-3-deoxy-D-manno-octulosonate from 3-deoxy-D-manno-octulosonate and CTP: step 1/1. It participates in bacterial outer membrane biogenesis; lipopolysaccharide biosynthesis. Its function is as follows. Activates KDO (a required 8-carbon sugar) for incorporation into bacterial lipopolysaccharide in Gram-negative bacteria. This Acidovorax ebreus (strain TPSY) (Diaphorobacter sp. (strain TPSY)) protein is 3-deoxy-manno-octulosonate cytidylyltransferase.